Reading from the N-terminus, the 387-residue chain is Lymphocyte transmembrane adapter 1 (387 aa).

Residues 1 to 37 (MDVTTSAWSETTRRISEPSTLQGTLGSLDKAEDHSSS) are Extracellular-facing. Residues 38–58 (IFSGFAALLAILLVVAVICVL) form a helical; Signal-anchor for type III membrane protein membrane-spanning segment. The Cytoplasmic segment spans residues 59–387 (WCCGKRKKRQ…VCAAEAGARG (329 aa)). Positions 114 to 136 (VSTESLLSRNSDSPSSEHVPSRA) are disordered. A compositionally biased stretch (low complexity) spans 118 to 129 (SLLSRNSDSPSS). Y195 is subject to Phosphotyrosine. The segment at 230 to 268 (SEEIDEGCGNASDCTSLGSPGTENSDPLSDGEGSSQTSN) is disordered. Residues 241–268 (SDCTSLGSPGTENSDPLSDGEGSSQTSN) show a composition bias toward polar residues. Y270 and Y296 each carry phosphotyrosine. Positions 294 to 387 (RDYENVPPGP…VCAAEAGARG (94 aa)) are disordered. Residues 319-329 (DHVEGRTDGPE) show a composition bias toward basic and acidic residues. A compositionally biased stretch (acidic residues) spans 360-369 (PWEDAEETSS). Y375 bears the Phosphotyrosine mark.

As to quaternary structure, when phosphorylated, interacts with GRB2, PIK3R1 and GRAP2. Phosphorylated on tyrosines upon TCR or BCR activation; which leads to the recruitment of GRB2, PIK3R1 and GRAP2.

It is found in the cell membrane. Functionally, negatively regulates TCR (T-cell antigen receptor)-mediated signaling in T-cells and BCR (B-cell antigen receptor)-mediated signaling in B-cells. This Bos taurus (Bovine) protein is Lymphocyte transmembrane adapter 1 (LAX1).